The primary structure comprises 213 residues: Orotate phosphoribosyltransferase (213 aa).

K26 is a 5-phospho-alpha-D-ribose 1-diphosphate binding site. 34–35 (FF) provides a ligand contact to orotate. 5-phospho-alpha-D-ribose 1-diphosphate is bound by residues 72 to 73 (YK), R99, K100, K103, H105, and 124 to 132 (DDVITAGTA). Orotate contacts are provided by T128 and R156.

This sequence belongs to the purine/pyrimidine phosphoribosyltransferase family. PyrE subfamily. In terms of assembly, homodimer. Mg(2+) is required as a cofactor.

The enzyme catalyses orotidine 5'-phosphate + diphosphate = orotate + 5-phospho-alpha-D-ribose 1-diphosphate. It functions in the pathway pyrimidine metabolism; UMP biosynthesis via de novo pathway; UMP from orotate: step 1/2. Functionally, catalyzes the transfer of a ribosyl phosphate group from 5-phosphoribose 1-diphosphate to orotate, leading to the formation of orotidine monophosphate (OMP). This Thioalkalivibrio sulfidiphilus (strain HL-EbGR7) protein is Orotate phosphoribosyltransferase.